A 304-amino-acid chain; its full sequence is Proline dehydrogenase 2 (304 aa).

K97 contacts substrate. D131 is a catalytic residue. M132 and Q160 together coordinate FAD. Residue R181 is part of the active site. Residues K184–A186 and T223–H224 each bind FAD. Residue R285 to R286 participates in substrate binding.

The protein belongs to the proline dehydrogenase family. FAD serves as cofactor.

The enzyme catalyses L-proline + a quinone = (S)-1-pyrroline-5-carboxylate + a quinol + H(+). It participates in amino-acid degradation; L-proline degradation into L-glutamate; L-glutamate from L-proline: step 1/2. In terms of biological role, converts proline to delta-1-pyrroline-5-carboxylate. This is Proline dehydrogenase 2 from Bacillus subtilis subsp. natto.